Reading from the N-terminus, the 153-residue chain is Endoribonuclease YbeY (153 aa).

Zn(2+) contacts are provided by H112, H116, and H122.

The protein belongs to the endoribonuclease YbeY family. Zn(2+) is required as a cofactor.

It localises to the cytoplasm. Functionally, single strand-specific metallo-endoribonuclease involved in late-stage 70S ribosome quality control and in maturation of the 3' terminus of the 16S rRNA. The protein is Endoribonuclease YbeY of Persephonella marina (strain DSM 14350 / EX-H1).